We begin with the raw amino-acid sequence, 618 residues long: Manganese lipoxygenase (618 aa).

Residues M1–A16 form the signal peptide. A compositionally biased stretch (low complexity) spans S36–T45. The disordered stretch occupies residues S36–A58. Residues Q46–A58 are compositionally biased toward polar residues. A Lipoxygenase domain is found at Y47–S617. Residues N60, N91, N106, N116, and N157 are each glycosylated (N-linked (GlcNAc...) asparagine). Positions 290, 294, 478, and 482 each coordinate Mn(2+). N513 is a glycosylation site (N-linked (GlcNAc...) asparagine). V618 lines the Mn(2+) pocket.

It belongs to the lipoxygenase family. The cofactor is Mn(2+). N- and O-glycosylated.

It localises to the secreted. The enzyme catalyses (9Z,12Z)-octadecadienoate + O2 = (11S)-hydroperoxy-(9Z,12Z)-octadecadienoate. It catalyses the reaction (9Z,12Z)-octadecadienoate + O2 = (13R)-hydroperoxy-(9Z,11E)-octadecadienoate. The catalysed reaction is (9Z,12Z,15Z)-octadecatrienoate + O2 = (11S)-hydroperoxy-(9Z,12Z,15Z)-octadecatrienoate. It carries out the reaction (9Z,12Z,15Z)-octadecatrienoate + O2 = (13R)-hydroperoxy-(9Z,11E,15Z)-octadecatrienoate. Its function is as follows. Lipoxygenase that metabolizes linoleic and alpha-linolenic acids to 11S- and 13R-hydroperoxy fatty acids. At the end of lipoxygenation, the intermediate product 11S-HPODE from linoleic acid is then transformed into 13R-HPODE as the final product. It also acts on alpha-linolenic acid producing 11S-HPOTrE and 13R-HPOTrE with subsequent transformation of 11S-HPOTrE to 13R-HPOTrE as the final product. Gamma-linolenic acid is a poor substrate. Oleate and arachidonate are not substrates. This Gaeumannomyces tritici (Wheat and barley take-all root rot fungus) protein is Manganese lipoxygenase.